The sequence spans 868 residues: Probable mixed-linked glucan synthase 3 (868 aa).

Residues E36–G68 form a disordered region. The segment covering A53–G68 has biased composition (basic and acidic residues). 2 helical membrane-spanning segments follow: residues L86 to G106 and I116 to L136. D211 is a catalytic residue. D412 and D414 together coordinate substrate. The active site involves D573. Transmembrane regions (helical) follow at residues I649–I669, L686–I706, F717–L737, M771–G791, I809–I829, and P837–A857.

It belongs to the glycosyltransferase 2 family. Plant cellulose synthase-like F subfamily.

It localises to the golgi apparatus membrane. Functionally, may catalyze both beta-1,3 and beta-1,4 glycosidic linkage on beta-D-glucan. Essential for (1,3;1,4)-beta-D-glucans synthesis in grasses and cereals (Poaceae). The mixed-linked glucans (which are not present in walls of dicotyledons or most other monocotyledonous plants) are particularly important constituents of the walls of the starchy endosperm and aleurone cells of cereal grains such as oats, wheat, rice and barley. They can account for up to 70% by weight of the wall. The protein is Probable mixed-linked glucan synthase 3 (CSLF3) of Oryza sativa subsp. indica (Rice).